Here is a 167-residue protein sequence, read N- to C-terminus: MGGKHDISRRQFLNYTLTGVGGFMAASMLMPMVRFALDPVLKSTGKQDMVQVVSVDELTKEPQRFDFKINQVDAWYESEESRSAWVFKNGDEIVALSPICKHLGCTVNWNSDPKNPNKFFCPCHYGLYEKDGTNVPGTPPLAPLDHYEQEVKDGFLYLGKAKPKGEG.

The Rieske domain occupies 59–158 (TKEPQRFDFK…QEVKDGFLYL (100 aa)). C100, H102, C121, and H124 together coordinate [2Fe-2S] cluster. C105 and C123 are disulfide-bonded.

It belongs to the Rieske iron-sulfur protein family. In terms of assembly, the main subunits of the menaquinol:cytochrome c complex are a Rieske-type iron-sulfur protein (QcrA), a cytochrome b (QcrB) and a cytochrome c (QcrC). It depends on [2Fe-2S] cluster as a cofactor.

In terms of biological role, component of the menaquinol:cytochrome c reductase complex. The Rieske protein is a high potential 2Fe-2S protein. The polypeptide is Menaquinol:cytochrome c reductase iron-sulfur subunit (qcrA) (Bacillus subtilis (strain 168)).